Reading from the N-terminus, the 62-residue chain is Conotoxin TsMLCL-02 (62 aa).

A signal peptide spans 1–19; it reads MLCLPVFIILLLLASPAAP. The propeptide occupies 20-54; sequence NPLERRIQSDLIRAALEDADMKTEKGILSSIMGTL.

It belongs to the conotoxin T superfamily. As to expression, expressed by the venom duct.

The protein localises to the secreted. This Conus tessulatus (Tessellate cone) protein is Conotoxin TsMLCL-02.